The chain runs to 255 residues: 5'-nucleotidase SurE (255 aa).

Residues Asp8, Asp9, Ser39, and Asn91 each coordinate a divalent metal cation.

This sequence belongs to the SurE nucleotidase family. A divalent metal cation is required as a cofactor.

The protein resides in the cytoplasm. It catalyses the reaction a ribonucleoside 5'-phosphate + H2O = a ribonucleoside + phosphate. Its function is as follows. Nucleotidase that shows phosphatase activity on nucleoside 5'-monophosphates. The chain is 5'-nucleotidase SurE from Acinetobacter baylyi (strain ATCC 33305 / BD413 / ADP1).